The primary structure comprises 643 residues: Chromosomal replication initiator protein DnaA (643 aa).

Residues 1 to 97 are domain I, interacts with DnaA modulators; that stretch reads MADVPADLAA…VDDSAGEPPP (97 aa). The disordered stretch occupies residues 87–303; it reads TVDDSAGEPP…ASGPGEPTAR (217 aa). Positions 97–302 are domain II; it reads PAAPPAQQTP…PASGPGEPTA (206 aa). Over residues 195 to 209 the composition is skewed to polar residues; it reads SPSSQDAYGSPSQDY. A compositionally biased stretch (basic and acidic residues) spans 222–269; that stretch reads QRGDYDTPRAEYEPARPDYDSARPDYESARPEYDQRDPVRRELPEPPA. Residues 291–300 are compositionally biased toward low complexity; that stretch reads PAPASGPGEP. A domain III, AAA+ region region spans residues 303 to 519; that stretch reads RLNPKYLFDT…GALIRVTAFA (217 aa). ATP is bound by residues G347, G349, K350, and T351. The segment at 520-643 is domain IV, binds dsDNA; sequence SLNRQPVDLG…TELTNRIKNG (124 aa).

It belongs to the DnaA family. In terms of assembly, oligomerizes as a right-handed, spiral filament on DNA at oriC.

The protein resides in the cytoplasm. Plays an essential role in the initiation and regulation of chromosomal replication. ATP-DnaA binds to the origin of replication (oriC) to initiate formation of the DNA replication initiation complex once per cell cycle. Binds the DnaA box (a 9 base pair repeat at the origin) and separates the double-stranded (ds)DNA. Forms a right-handed helical filament on oriC DNA; dsDNA binds to the exterior of the filament while single-stranded (ss)DNA is stabiized in the filament's interior. The ATP-DnaA-oriC complex binds and stabilizes one strand of the AT-rich DNA unwinding element (DUE), permitting loading of DNA polymerase. After initiation quickly degrades to an ADP-DnaA complex that is not apt for DNA replication. Binds acidic phospholipids. The polypeptide is Chromosomal replication initiator protein DnaA (Streptomyces reticuli).